The chain runs to 305 residues: Porphobilinogen deaminase (305 aa).

The residue at position 238 (C238) is an S-(dipyrrolylmethanemethyl)cysteine.

Belongs to the HMBS family. Monomer. Requires dipyrromethane as cofactor.

It carries out the reaction 4 porphobilinogen + H2O = hydroxymethylbilane + 4 NH4(+). Its pathway is porphyrin-containing compound metabolism; protoporphyrin-IX biosynthesis; coproporphyrinogen-III from 5-aminolevulinate: step 2/4. Functionally, tetrapolymerization of the monopyrrole PBG into the hydroxymethylbilane pre-uroporphyrinogen in several discrete steps. The chain is Porphobilinogen deaminase from Rubrobacter xylanophilus (strain DSM 9941 / JCM 11954 / NBRC 16129 / PRD-1).